The primary structure comprises 472 residues: Chromosomal replication initiator protein DnaA (472 aa).

Residues 1–80 (MDTKQIWFTT…YQVNVRVIIS (80 aa)) form a domain I, interacts with DnaA modulators region. A domain II region spans residues 80-130 (SSATPAPSEPVAVTPSEPSPTTEVAEPSFASFNQAAPMLNQLPLGDPNRSS). The tract at residues 131–347 (VLNPRYTFSS…GCLNRVIAYA (217 aa)) is domain III, AAA+ region. The ATP site is built by glycine 175, glycine 177, lysine 178, and threonine 179. Positions 348 to 472 (NLNRTPVTVE…RQRLYGENAR (125 aa)) are domain IV, binds dsDNA.

The protein belongs to the DnaA family. As to quaternary structure, oligomerizes as a right-handed, spiral filament on DNA at oriC.

Its subcellular location is the cytoplasm. Functionally, plays an essential role in the initiation and regulation of chromosomal replication. ATP-DnaA binds to the origin of replication (oriC) to initiate formation of the DNA replication initiation complex once per cell cycle. Binds the DnaA box (a 9 base pair repeat at the origin) and separates the double-stranded (ds)DNA. Forms a right-handed helical filament on oriC DNA; dsDNA binds to the exterior of the filament while single-stranded (ss)DNA is stabiized in the filament's interior. The ATP-DnaA-oriC complex binds and stabilizes one strand of the AT-rich DNA unwinding element (DUE), permitting loading of DNA polymerase. After initiation quickly degrades to an ADP-DnaA complex that is not apt for DNA replication. Binds acidic phospholipids. This is Chromosomal replication initiator protein DnaA from Herpetosiphon aurantiacus (strain ATCC 23779 / DSM 785 / 114-95).